A 595-amino-acid polypeptide reads, in one-letter code: uncharacterized protein (595 aa).

Residues 1–23 (MLSLSSPPWLLLLVLFFFANGSA) form the signal peptide. N31, N63, N88, N112, N144, N187, N205, N389, N480, N492, and N506 each carry an N-linked (GlcNAc...) asparagine glycan. Over residues 61 to 83 (LENQTASSSNLNTNNEASDEQTG) the composition is skewed to polar residues. Disordered stretches follow at residues 61–119 (LENQ…VSSL) and 141–164 (TALN…TKGE). Positions 84-119 (NSNSNTSSHSRNINGLPSSNSNIDNANSNSSSVSSL) are enriched in low complexity.

The protein localises to the secreted. This is an uncharacterized protein from Drosophila melanogaster (Fruit fly).